The primary structure comprises 287 residues: Complement C1q-like protein 2 (287 aa).

The N-terminal stretch at 1 to 21 is a signal peptide; it reads MALGLLIAVPLLLQAAPPGAA. The interval 65–144 is disordered; the sequence is LSANPPPPFI…GTGGGGDTEG (80 aa). The 43-residue stretch at 76-118 folds into the Collagen-like domain; sequence GPKGDPGRPGKPGPRGPPGEPGPPGPRGPPGEKGDSGRPGLPG. The segment covering 84–104 has biased composition (pro residues); it reads PGKPGPRGPPGEPGPPGPRGP. The segment covering 127–141 has biased composition (gly residues); that stretch reads GGVGVVSGGTGGGGD. The C1q domain maps to 154–287; it reads FSGPKIAFYV…TFSGFLLYPD (134 aa).

Forms homotrimers which can further assemble to form higher-order oligomeric complexes. Interacts with ADGRB3. May interact with ERFE. Forms heterooligomers with C1QL3 and C1QL4, when proteins are coexpressed; this interaction does not occur after secretion. In terms of processing, glycosylated, but not with N-linked glycans. As to expression, highest expression in eye, followed by placenta and brain, intermediate expression in adipose tissue and lowest expression in lymph node and testis.

The protein localises to the secreted. In terms of biological role, may regulate the number of excitatory synapses that are formed on hippocampus neurons. Has no effect on inhibitory synapses. This chain is Complement C1q-like protein 2 (C1ql2), found in Mus musculus (Mouse).